Here is a 421-residue protein sequence, read N- to C-terminus: UDP-N-acetylglucosamine 1-carboxyvinyltransferase (421 aa).

22–23 provides a ligand contact to phosphoenolpyruvate; it reads KN. Arg-94 contacts UDP-N-acetyl-alpha-D-glucosamine. The active-site Proton donor is the Cys-118. Position 118 is a 2-(S-cysteinyl)pyruvic acid O-phosphothioketal (Cys-118). Residues 123-127, Asp-308, and Ile-330 each bind UDP-N-acetyl-alpha-D-glucosamine; that span reads RPMDL.

The protein belongs to the EPSP synthase family. MurA subfamily.

It is found in the cytoplasm. The enzyme catalyses phosphoenolpyruvate + UDP-N-acetyl-alpha-D-glucosamine = UDP-N-acetyl-3-O-(1-carboxyvinyl)-alpha-D-glucosamine + phosphate. It participates in cell wall biogenesis; peptidoglycan biosynthesis. Its function is as follows. Cell wall formation. Adds enolpyruvyl to UDP-N-acetylglucosamine. In Ruegeria pomeroyi (strain ATCC 700808 / DSM 15171 / DSS-3) (Silicibacter pomeroyi), this protein is UDP-N-acetylglucosamine 1-carboxyvinyltransferase.